Here is a 1992-residue protein sequence, read N- to C-terminus: Fer-1-like protein 4 (1992 aa).

C2 domains are found at residues 1–97 (MALT…VLRE), 214–330 (PRGD…QKWA), and 369–502 (TSSD…AGFN). Over 1 to 1952 (MALTVCVRHL…PLKTFIFFIW (1952 aa)) the chain is Extracellular. 3 disordered regions span residues 554–606 (RVEP…APEI), 661–686 (AGRQEEQSGQGSRADEGSESSTLEVQ), and 691–710 (SEDRGAGQEEQELLGTPAQW). Over residues 559-569 (PSQTTQRSGLS) the composition is skewed to polar residues. A compositionally biased stretch (basic residues) spans 572–581 (TGKKKKKKEK). 2 consecutive C2 domains span residues 951–1078 (PSSG…ELQF) and 1126–1250 (ISGH…PQEE). 2 disordered regions span residues 1245–1276 (EDPQEEEETEEETRDLVPHGPQGEKSLPEAGT) and 1322–1361 (FQGQPSSDDEMDEAGDADGTHLISGDREAQEQGETDSKVS). Composition is skewed to acidic residues over residues 1247–1257 (PQEEEETEEET) and 1328–1337 (SDDEMDEAGD). C2 domains follow at residues 1430 to 1549 (SFSE…ANCG) and 1675 to 1824 (VPAP…EHCS). Ca(2+) contacts are provided by D1464, D1470, D1519, D1521, D1527, D1795, S1798, and D1801. The interval 1862 to 1885 (EAREAQAGKKRKRKRRAGRPEDLE) is disordered. Positions 1869–1878 (GKKRKRKRRA) are enriched in basic residues. Residues 1953–1973 (RRYWRILVLLLLALITIFLLL) traverse the membrane as a helical segment. Over 1974–1992 (VFYTIPGQISEVIFSPVHK) the chain is Cytoplasmic.

The cofactor is Ca(2+).

The protein localises to the membrane. This Mus musculus (Mouse) protein is Fer-1-like protein 4 (Fer1l4).